The following is a 363-amino-acid chain: 3-isopropylmalate dehydrogenase (363 aa).

NAD(+) is bound at residue 79–92 (GPKWEHLPPNEQPE). Substrate-binding residues include Arg-100, Arg-110, Arg-139, and Asp-228. Residues Asp-228, Asp-252, and Asp-256 each contribute to the Mg(2+) site. 286–298 (GSAPDIAGKNIAN) is a binding site for NAD(+).

The protein belongs to the isocitrate and isopropylmalate dehydrogenases family. LeuB type 1 subfamily. Homodimer. Requires Mg(2+) as cofactor. It depends on Mn(2+) as a cofactor.

It localises to the cytoplasm. It catalyses the reaction (2R,3S)-3-isopropylmalate + NAD(+) = 4-methyl-2-oxopentanoate + CO2 + NADH. Its pathway is amino-acid biosynthesis; L-leucine biosynthesis; L-leucine from 3-methyl-2-oxobutanoate: step 3/4. Its function is as follows. Catalyzes the oxidation of 3-carboxy-2-hydroxy-4-methylpentanoate (3-isopropylmalate) to 3-carboxy-4-methyl-2-oxopentanoate. The product decarboxylates to 4-methyl-2 oxopentanoate. The sequence is that of 3-isopropylmalate dehydrogenase from Vibrio cholerae serotype O1 (strain ATCC 39315 / El Tor Inaba N16961).